We begin with the raw amino-acid sequence, 158 residues long: Inorganic pyrophosphatase (158 aa).

Residue Glu8 participates in Mg(2+) binding. Positions 16, 30, and 42 each coordinate substrate. The Mg(2+) site is built by Asp52, Asp57, Asp84, and Asp89. Asp89 functions as the Proton acceptor in the catalytic mechanism. Residue Tyr125 coordinates substrate.

It belongs to the PPase family. Homohexamer. It depends on Mg(2+) as a cofactor.

The protein resides in the cytoplasm. It catalyses the reaction diphosphate + H2O = 2 phosphate + H(+). In terms of biological role, catalyzes the hydrolysis of inorganic pyrophosphate (PPi) forming two phosphate ions. The protein is Inorganic pyrophosphatase of Corynebacterium efficiens (strain DSM 44549 / YS-314 / AJ 12310 / JCM 11189 / NBRC 100395).